A 341-amino-acid polypeptide reads, in one-letter code: tRNA N6-adenosine threonylcarbamoyltransferase (341 aa).

Residues His-115 and His-119 each contribute to the Fe cation site. Substrate contacts are provided by residues 138–142 (VVSGG), Asp-171, Gly-184, Asp-188, and Asn-279. A Fe cation-binding site is contributed by Asp-307.

Belongs to the KAE1 / TsaD family. Requires Fe(2+) as cofactor.

The protein resides in the cytoplasm. The catalysed reaction is L-threonylcarbamoyladenylate + adenosine(37) in tRNA = N(6)-L-threonylcarbamoyladenosine(37) in tRNA + AMP + H(+). Its function is as follows. Required for the formation of a threonylcarbamoyl group on adenosine at position 37 (t(6)A37) in tRNAs that read codons beginning with adenine. Is involved in the transfer of the threonylcarbamoyl moiety of threonylcarbamoyl-AMP (TC-AMP) to the N6 group of A37, together with TsaE and TsaB. TsaD likely plays a direct catalytic role in this reaction. This chain is tRNA N6-adenosine threonylcarbamoyltransferase, found in Clostridium kluyveri (strain NBRC 12016).